The sequence spans 152 residues: Catabolic 3-dehydroquinase 1 (152 aa).

The Proton acceptor role is filled by Tyr24. The substrate site is built by Asn75, His81, and Asp88. Residue His101 is the Proton donor of the active site. Residues 102–103 (VS) and Arg112 each bind substrate.

Belongs to the type-II 3-dehydroquinase family. Homododecamer. Adopts a ring-like structure, composed of an arrangement of two hexameric rings stacked on top of one another.

It catalyses the reaction 3-dehydroquinate = 3-dehydroshikimate + H2O. It functions in the pathway aromatic compound metabolism; 3,4-dihydroxybenzoate biosynthesis; 3,4-dihydroxybenzoate from 3-dehydroquinate: step 1/2. Is involved in the catabolism of quinate. Allows the utilization of quinate as carbon source via the beta-ketoadipate pathway. This chain is Catabolic 3-dehydroquinase 1, found in Aspergillus terreus (strain NIH 2624 / FGSC A1156).